Consider the following 103-residue polypeptide: UPF0145 protein pXO2-45/BXB0052/GBAA_pXO2_0052 (103 aa).

This sequence belongs to the UPF0145 family.

This chain is UPF0145 protein pXO2-45/BXB0052/GBAA_pXO2_0052, found in Bacillus anthracis.